A 217-amino-acid chain; its full sequence is uncharacterized protein (217 aa).

The protein to M.tuberculosis Rv2926c.

This is an uncharacterized protein from Mycobacterium leprae (strain TN).